Here is a 581-residue protein sequence, read N- to C-terminus: ATP-dependent lipid A-core flippase (581 aa).

Transmembrane regions (helical) follow at residues 21 to 41, 65 to 85, 138 to 158, 161 to 181, 246 to 266, and 271 to 291; these read TVAI…ALFI, FVVI…SYCL, ALLI…VMFY, WQLS…VTVV, LSVS…LWVV, and MIDT…MMLL. The 283-residue stretch at 24–306 folds into the ABC transmembrane type-1 domain; the sequence is IVAIIGMIGY…LANVNSDMQR (283 aa). Residues 338-575 enclose the ABC transporter domain; sequence IEVKNVTFKY…NGTYSALCKM (238 aa). 372 to 379 is a binding site for ATP; sequence GRSGSGKS.

It belongs to the ABC transporter superfamily. Lipid exporter (TC 3.A.1.106) family. As to quaternary structure, homodimer.

Its subcellular location is the cell inner membrane. The catalysed reaction is ATP + H2O + lipid A-core oligosaccharideSide 1 = ADP + phosphate + lipid A-core oligosaccharideSide 2.. Its function is as follows. Involved in lipopolysaccharide (LPS) biosynthesis. Translocates lipid A-core from the inner to the outer leaflet of the inner membrane. Transmembrane domains (TMD) form a pore in the inner membrane and the ATP-binding domain (NBD) is responsible for energy generation. This Pseudoalteromonas translucida (strain TAC 125) protein is ATP-dependent lipid A-core flippase.